Here is a 219-residue protein sequence, read N- to C-terminus: uncharacterized protein (219 aa).

Positions 1–26 are cleaved as a signal peptide; the sequence is MNDRGVPNSRTGPSLLALLPAANSYA. 2 disordered regions span residues 36–57 and 88–219; these read AVGV…TRGG and SGLG…GLCE. Positions 127–173 are enriched in low complexity; the sequence is LSPPSALGSSPAGRGRPAPAIAAAKSSPLSASAAPGRCGARPRAPSR. The segment covering 176–202 has biased composition (basic residues); it reads RERRPRGNPRAPLRRGARGRRRSHTRG.

This is an uncharacterized protein from Gallid herpesvirus 2 (strain Chicken/Md5/ATCC VR-987) (GaHV-2).